Consider the following 201-residue polypeptide: Ribosomal RNA large subunit methyltransferase E (201 aa).

Positions 40, 42, 62, 78, and 101 each coordinate S-adenosyl-L-methionine. Residue Lys141 is the Proton acceptor of the active site.

It belongs to the class I-like SAM-binding methyltransferase superfamily. RNA methyltransferase RlmE family.

It localises to the cytoplasm. The catalysed reaction is uridine(2552) in 23S rRNA + S-adenosyl-L-methionine = 2'-O-methyluridine(2552) in 23S rRNA + S-adenosyl-L-homocysteine + H(+). Functionally, specifically methylates the uridine in position 2552 of 23S rRNA at the 2'-O position of the ribose in the fully assembled 50S ribosomal subunit. In Anaplasma marginale (strain Florida), this protein is Ribosomal RNA large subunit methyltransferase E.